Consider the following 447-residue polypeptide: Dihydroorotase (447 aa).

Residues His-84 and His-86 each coordinate Zn(2+). Residues His-86–Arg-88 and Asn-118 contribute to the substrate site. Positions 174, 201, and 255 each coordinate Zn(2+). Asn-301 provides a ligand contact to substrate. A Zn(2+)-binding site is contributed by Asp-328. Residue Asp-328 is part of the active site. Residues His-332 and Phe-346–Gly-347 each bind substrate.

It belongs to the metallo-dependent hydrolases superfamily. DHOase family. Class I DHOase subfamily. The cofactor is Zn(2+).

The enzyme catalyses (S)-dihydroorotate + H2O = N-carbamoyl-L-aspartate + H(+). Its pathway is pyrimidine metabolism; UMP biosynthesis via de novo pathway; (S)-dihydroorotate from bicarbonate: step 3/3. In terms of biological role, catalyzes the reversible cyclization of carbamoyl aspartate to dihydroorotate. The sequence is that of Dihydroorotase from Anaplasma phagocytophilum (strain HZ).